A 489-amino-acid chain; its full sequence is Rhamnulokinase (489 aa).

13–17 serves as a coordination point for ATP; that stretch reads ASSGR. Cysteines 68 and 222 form a disulfide. Substrate contacts are provided by residues glycine 83 and 236-238; that span reads HDT. Aspartate 237 functions as the Proton acceptor in the catalytic mechanism. Residue threonine 259 participates in ATP binding. Residue asparagine 296 coordinates substrate. Glutamine 304 is an ATP binding site. Cysteine 353 and cysteine 370 are joined by a disulfide. Residue glycine 402 participates in ATP binding. Cysteine 413 and cysteine 417 are oxidised to a cystine.

The protein belongs to the rhamnulokinase family. Mg(2+) is required as a cofactor.

The catalysed reaction is L-rhamnulose + ATP = L-rhamnulose 1-phosphate + ADP + H(+). It functions in the pathway carbohydrate degradation; L-rhamnose degradation; glycerone phosphate from L-rhamnose: step 2/3. Functionally, involved in the catabolism of L-rhamnose (6-deoxy-L-mannose). Catalyzes the transfer of the gamma-phosphate group from ATP to the 1-hydroxyl group of L-rhamnulose to yield L-rhamnulose 1-phosphate. This is Rhamnulokinase from Salmonella choleraesuis (strain SC-B67).